The sequence spans 306 residues: 4-diphosphocytidyl-2-C-methyl-D-erythritol kinase (306 aa).

Residue lysine 11 is part of the active site. Position 113 to 123 (113 to 123 (PPEGGIGGGSS)) interacts with ATP. Aspartate 153 is a catalytic residue.

The protein belongs to the GHMP kinase family. IspE subfamily.

It catalyses the reaction 4-CDP-2-C-methyl-D-erythritol + ATP = 4-CDP-2-C-methyl-D-erythritol 2-phosphate + ADP + H(+). Its pathway is isoprenoid biosynthesis; isopentenyl diphosphate biosynthesis via DXP pathway; isopentenyl diphosphate from 1-deoxy-D-xylulose 5-phosphate: step 3/6. Its function is as follows. Catalyzes the phosphorylation of the position 2 hydroxy group of 4-diphosphocytidyl-2C-methyl-D-erythritol. The polypeptide is 4-diphosphocytidyl-2-C-methyl-D-erythritol kinase (Leptospira biflexa serovar Patoc (strain Patoc 1 / ATCC 23582 / Paris)).